We begin with the raw amino-acid sequence, 378 residues long: S-(hydroxymethyl)glutathione dehydrogenase (378 aa).

Residues cysteine 49, histidine 71, cysteine 101, cysteine 104, cysteine 107, cysteine 115, and cysteine 178 each contribute to the Zn(2+) site.

Belongs to the zinc-containing alcohol dehydrogenase family. Class-III subfamily. In terms of assembly, homodimer. The cofactor is Zn(2+).

The protein localises to the cytoplasm. The catalysed reaction is S-(hydroxymethyl)glutathione + NADP(+) = S-formylglutathione + NADPH + H(+). It carries out the reaction S-(hydroxymethyl)glutathione + NAD(+) = S-formylglutathione + NADH + H(+). It catalyses the reaction a primary alcohol + NAD(+) = an aldehyde + NADH + H(+). The enzyme catalyses a secondary alcohol + NAD(+) = a ketone + NADH + H(+). The catalysed reaction is S-nitrosoglutathione + NADH + H(+) = S-(hydroxysulfenamide)glutathione + NAD(+). In terms of biological role, has high formaldehyde dehydrogenase activity in the presence of glutathione and catalyzes the oxidation of normal alcohols in a reaction that is not GSH-dependent. In addition, hemithiolacetals other than those formed from GSH, including omega-thiol fatty acids, also are substrates. Also acts as a S-nitroso-glutathione reductase by catalyzing the NADH-dependent reduction of S-nitrosoglutathione. The sequence is that of S-(hydroxymethyl)glutathione dehydrogenase (frmA) from Haemophilus influenzae (strain ATCC 51907 / DSM 11121 / KW20 / Rd).